Consider the following 670-residue polypeptide: Oxidoreductase PigB (670 aa).

Positions 1 to 19 are cleaved as a signal peptide; it reads MIIQRLFGILYMLAGLAKA. 4 helical membrane-spanning segments follow: residues 53–73, 76–96, 98–118, and 238–258; these read GDVINILVGVVLFGSGVILML, LWTTLVIYAQLLMMAVFVVIL, QSQPQVMLLDGVFALAALYML, and LVFFDTFLLLKCLGEIVVGFI.

The protein belongs to the flavin monoamine oxidase family. FAD is required as a cofactor.

The protein resides in the membrane. It functions in the pathway antibiotic biosynthesis; prodigiosin biosynthesis. Involved in the biosynthesis of 2-methyl-3-n-amyl-pyrrole (MAP), one of the terminal products involved in the biosynthesis of the red antibiotic prodigiosin (Pig). Catalyzes the oxidation of dihydro form of MAP (H2MAP) to yield MAP. This Serratia sp. (strain ATCC 39006) (Prodigiosinella confusarubida) protein is Oxidoreductase PigB.